Here is a 533-residue protein sequence, read N- to C-terminus: NAD(P)H-quinone oxidoreductase chain 4 2 (533 aa).

14 helical membrane passes run 5 to 25 (FPWLTVLTLLPLVAAFFIPVL), 33 to 53 (VRWYALAIALLEFGLSAMVFW), 86 to 106 (LAVPLILLTGLVNTLAIFAAW), 114 to 134 (LFYFLMLALYSAQIGVFAAQD), 135 to 155 (LILFFLIWELELVPVYLLISI), 168 to 188 (FILYTAVGSLFILIAGLGMAF), 208 to 228 (ALELLAYAGFLIAFGVKLPIF), 242 to 262 (SAPVSMVLAGVLLKMGGYGLI), 276 to 296 (FAPVLIALGVVNIIYGALTAF), 310 to 330 (ISHMGFVLLGIGALNGIGLNG), 331 to 351 (AMLQMLSHGLIAAVLFFLAGV), 384 to 404 (ASLALPGMSGFVSELTVFLGL), 416 to 436 (VGVIFLAAVGVIITPVYLLSM), and 462 to 482 (TFIALSLLVPIIAVGMYPKVA).

Belongs to the complex I subunit 4 family.

The protein localises to the cellular thylakoid membrane. The catalysed reaction is a plastoquinone + NADH + (n+1) H(+)(in) = a plastoquinol + NAD(+) + n H(+)(out). It catalyses the reaction a plastoquinone + NADPH + (n+1) H(+)(in) = a plastoquinol + NADP(+) + n H(+)(out). Functionally, NDH-1 shuttles electrons from NAD(P)H, via FMN and iron-sulfur (Fe-S) centers, to quinones in the respiratory chain. The immediate electron acceptor for the enzyme in this species is believed to be plastoquinone. Couples the redox reaction to proton translocation (for every two electrons transferred, four hydrogen ions are translocated across the cytoplasmic membrane), and thus conserves the redox energy in a proton gradient. The sequence is that of NAD(P)H-quinone oxidoreductase chain 4 2 from Thermosynechococcus vestitus (strain NIES-2133 / IAM M-273 / BP-1).